The sequence spans 90 residues: Phosphocarrier protein HPr (90 aa).

The HPr domain occupies 1-89 (MPALEITIIN…ELINNRFDEG (89 aa)). His-15 (pros-phosphohistidine intermediate) is an active-site residue.

This sequence belongs to the HPr family.

The protein resides in the cytoplasm. General (non sugar-specific) component of the phosphoenolpyruvate-dependent sugar phosphotransferase system (sugar PTS). This major carbohydrate active-transport system catalyzes the phosphorylation of incoming sugar substrates concomitantly with their translocation across the cell membrane. The phosphoryl group from phosphoenolpyruvate (PEP) is transferred to the phosphoryl carrier protein HPr by enzyme I. Phospho-HPr then transfers it to the PTS EIIA domain. In Pseudomonas aeruginosa (strain ATCC 15692 / DSM 22644 / CIP 104116 / JCM 14847 / LMG 12228 / 1C / PRS 101 / PAO1), this protein is Phosphocarrier protein HPr (ptsH).